Here is a 309-residue protein sequence, read N- to C-terminus: Protein RTM1 (309 aa).

7 helical membrane-spanning segments follow: residues 22–42 (AIAL…QVVW), 83–103 (TFSA…GYIA), 119–139 (IQAV…YMLF), 162–182 (FFVF…GLMA), 193–213 (LITA…INEF), 233–253 (WWFL…RSIV), and 278–298 (AVPM…GNIF).

The protein belongs to the lipid-translocating exporter (LTE) (TC 9.A.26.1) family.

The protein resides in the membrane. Its function is as follows. Confers resistance to molasses (to a particular toxic element present in some molasses). In Saccharomyces cerevisiae (Baker's yeast), this protein is Protein RTM1 (RTM1).